Here is a 354-residue protein sequence, read N- to C-terminus: UDP-N-acetylglucosamine--N-acetylmuramyl-(pentapeptide) pyrophosphoryl-undecaprenol N-acetylglucosamine transferase (354 aa).

UDP-N-acetyl-alpha-D-glucosamine contacts are provided by residues 11 to 13 (TGG), asparagine 117, arginine 160, serine 186, and glutamine 288.

It belongs to the glycosyltransferase 28 family. MurG subfamily.

It is found in the cell inner membrane. The enzyme catalyses di-trans,octa-cis-undecaprenyl diphospho-N-acetyl-alpha-D-muramoyl-L-alanyl-D-glutamyl-meso-2,6-diaminopimeloyl-D-alanyl-D-alanine + UDP-N-acetyl-alpha-D-glucosamine = di-trans,octa-cis-undecaprenyl diphospho-[N-acetyl-alpha-D-glucosaminyl-(1-&gt;4)]-N-acetyl-alpha-D-muramoyl-L-alanyl-D-glutamyl-meso-2,6-diaminopimeloyl-D-alanyl-D-alanine + UDP + H(+). The protein operates within cell wall biogenesis; peptidoglycan biosynthesis. Functionally, cell wall formation. Catalyzes the transfer of a GlcNAc subunit on undecaprenyl-pyrophosphoryl-MurNAc-pentapeptide (lipid intermediate I) to form undecaprenyl-pyrophosphoryl-MurNAc-(pentapeptide)GlcNAc (lipid intermediate II). This chain is UDP-N-acetylglucosamine--N-acetylmuramyl-(pentapeptide) pyrophosphoryl-undecaprenol N-acetylglucosamine transferase, found in Rickettsia canadensis (strain McKiel).